Consider the following 382-residue polypeptide: D-galactonate dehydratase (382 aa).

A Mg(2+)-binding site is contributed by aspartate 183. The active-site Proton donor is the histidine 185. Residues glutamate 209 and glutamate 235 each coordinate Mg(2+). The Proton acceptor role is filled by histidine 285. The interval 361–382 (NENPPDWRNPVWRHSDGSIAEW) is disordered.

It belongs to the mandelate racemase/muconate lactonizing enzyme family. GalD subfamily. Mg(2+) serves as cofactor.

The enzyme catalyses D-galactonate = 2-dehydro-3-deoxy-D-galactonate + H2O. The protein operates within carbohydrate acid metabolism; D-galactonate degradation; D-glyceraldehyde 3-phosphate and pyruvate from D-galactonate: step 1/3. Its function is as follows. Catalyzes the dehydration of D-galactonate to 2-keto-3-deoxy-D-galactonate. The protein is D-galactonate dehydratase of Xanthomonas axonopodis pv. citri (strain 306).